A 283-amino-acid chain; its full sequence is Homeobox protein six1a (283 aa).

The homeobox DNA-binding region spans 124-183; the sequence is GEETSYCFKEKSRSVLREWYTHNPYPSPREKRELAEATGLTTTQVSNWFKNRRQRDRAAE. A disordered region spans residues 168–264; that stretch reads VSNWFKNRRQ…PLHGMQGHPH (97 aa). Residues 179-190 show a composition bias toward basic and acidic residues; that stretch reads DRAAEAKERENG. Residues 237 to 248 are compositionally biased toward low complexity; that stretch reads MNNPAAPAYPMP.

Belongs to the SIX/Sine oculis homeobox family.

It is found in the nucleus. Its subcellular location is the cytoplasm. Its function is as follows. Transcription factor that is involved in the regulation of cell proliferation, apoptosis and embryonic development. Depending on context, functions as a transcriptional repressor or activator. Plays an important role in the development of the inner ear, where it promotes hair cell proliferation and inhibits proliferation of neural progenitor cells. Required for normal myogenesis. Plays a role in the development of fast muscle fibers throughout the body, as well as the development of craniofacial muscles. The chain is Homeobox protein six1a (six1a) from Danio rerio (Zebrafish).